Reading from the N-terminus, the 1427-residue chain is Lysophospholipase NTE1 (1427 aa).

Over 1-60 (MDSLHVSSTSVLVDVVEAVETATSLVVDTAEAVATEQATPTAVISNALARSAYAAHTSLS) the chain is Cytoplasmic. A helical transmembrane segment spans residues 61-81 (YLAWAFGLWFLRLIGWVCYGI). Over 82-96 (PTYVLGLLGRTINIS) the chain is Lumenal. A helical membrane pass occupies residues 97–117 (LQFSSLLLILIALVTVVVAVV). Over 118-1427 (RYKYLTVYSR…KRTIARRNSI (1310 aa)) the chain is Cytoplasmic. Polar residues predominate over residues 281–296 (PMTSASDVPNMSLSSD). Residues 281–315 (PMTSASDVPNMSLSSDGSDDLQKGEPQFGEPRLSE) form a disordered region. A nucleoside 3',5'-cyclic phosphate is bound by residues 615-735 (LMAA…LTKV) and 731-870 (SLTK…VASR). The tract at residues 787–807 (GIVGGESGDAKDGKSHRKNLT) is disordered. In terms of domain architecture, PNPLA spans 1124–1288 (LVLGGGGARG…VDNLPVSEMK (165 aa)). Positions 1128 to 1133 (GGGARG) match the GXGXXG motif. The short motif at 1155–1159 (GTSIG) is the GXSXG element. The active-site Nucleophile is the S1157. The active-site Proton acceptor is the D1275. The short motif at 1275–1277 (DGG) is the DGA/G element.

It belongs to the NTE family.

The protein resides in the endoplasmic reticulum membrane. It catalyses the reaction a 1-acyl-sn-glycero-3-phosphocholine + H2O = sn-glycerol 3-phosphocholine + a fatty acid + H(+). Its activity is regulated as follows. Inhibited by organophosphorus esters. Intracellular phospholipase B that catalyzes the double deacylation of phosphatidylcholine (PC) to glycerophosphocholine (GroPCho). Plays an important role in membrane lipid homeostasis. Responsible for the rapid PC turnover in response to inositol, elevated temperatures, or when choline is present in the growth medium. The polypeptide is Lysophospholipase NTE1 (NTE1) (Yarrowia lipolytica (strain CLIB 122 / E 150) (Yeast)).